The primary structure comprises 59 residues: Photosystem II reaction center protein K (59 aa).

Positions 1-22 (MLNIFSLICLNSALYSSSFFFG) are excised as a propeptide. The chain crosses the membrane as a helical span at residues 30 to 50 (FLSPIVDFMPVIPLFFFLLAF).

In terms of assembly, PSII is composed of 1 copy each of membrane proteins PsbA, PsbB, PsbC, PsbD, PsbE, PsbF, PsbH, PsbI, PsbJ, PsbK, PsbL, PsbM, PsbT, PsbX, PsbY, PsbZ, Psb30/Ycf12, at least 3 peripheral proteins of the oxygen-evolving complex and a large number of cofactors. It forms dimeric complexes. This protein, PsbL and plastoquinone-9 are found in PSII dimers but not seen in PSII monomers.

The protein localises to the plastid. The protein resides in the chloroplast thylakoid membrane. One of the components of the core complex of photosystem II (PSII). PSII is a light-driven water:plastoquinone oxidoreductase that uses light energy to abstract electrons from H(2)O, generating O(2) and a proton gradient subsequently used for ATP formation. It consists of a core antenna complex that captures photons, and an electron transfer chain that converts photonic excitation into a charge separation. May be involved in PSII dimerization. Its function is as follows. One of the components of the core complex of photosystem II (PSII). PSII is a light-driven water:plastoquinone oxidoreductase that uses light energy to abstract electrons from H(2)O, generating O(2) and a proton gradient subsequently used for ATP formation. It consists of a core antenna complex that captures photons, and an electron transfer chain that converts photonic excitation into a charge separation. The protein is Photosystem II reaction center protein K of Spinacia oleracea (Spinach).